Here is a 275-residue protein sequence, read N- to C-terminus: Phosphate import ATP-binding protein PstB (275 aa).

Positions 29–270 (VSVRDLNFYY…PTDRRTQDYI (242 aa)) constitute an ABC transporter domain. 61–68 (GPSGCGKS) provides a ligand contact to ATP.

It belongs to the ABC transporter superfamily. Phosphate importer (TC 3.A.1.7) family. The complex is composed of two ATP-binding proteins (PstB), two transmembrane proteins (PstC and PstA) and a solute-binding protein (PstS).

It localises to the cell inner membrane. The enzyme catalyses phosphate(out) + ATP + H2O = ADP + 2 phosphate(in) + H(+). Its function is as follows. Part of the ABC transporter complex PstSACB involved in phosphate import. Responsible for energy coupling to the transport system. The polypeptide is Phosphate import ATP-binding protein PstB (Rhodopseudomonas palustris (strain BisB18)).